Reading from the N-terminus, the 308-residue chain is tRNA dimethylallyltransferase 2 (308 aa).

13–20 serves as a coordination point for ATP; the sequence is GPTASGKT. 15–20 contacts substrate; the sequence is TASGKT. An interaction with substrate tRNA region spans residues 38-41; that stretch reads DSRQ.

Belongs to the IPP transferase family. As to quaternary structure, monomer. It depends on Mg(2+) as a cofactor.

It catalyses the reaction adenosine(37) in tRNA + dimethylallyl diphosphate = N(6)-dimethylallyladenosine(37) in tRNA + diphosphate. Its function is as follows. Catalyzes the transfer of a dimethylallyl group onto the adenine at position 37 in tRNAs that read codons beginning with uridine, leading to the formation of N6-(dimethylallyl)adenosine (i(6)A). The sequence is that of tRNA dimethylallyltransferase 2 from Bacteroides fragilis (strain YCH46).